Consider the following 454-residue polypeptide: Bifunctional protein GlmU (454 aa).

The pyrophosphorylase stretch occupies residues 1–226 (MSLEIVILAA…AMEVQGVNDR (226 aa)). UDP-N-acetyl-alpha-D-glucosamine-binding positions include 8-11 (LAAG), Lys-22, Gln-73, 78-79 (GT), 99-101 (YGD), Gly-136, Glu-151, Asn-166, and Asn-224. Asp-101 serves as a coordination point for Mg(2+). Position 224 (Asn-224) interacts with Mg(2+). The segment at 227–247 (MQQAQLERHYQRLRAEELMRQ) is linker. Positions 248 to 454 (GVTLLDPQRL…NWKRPEKIKK (207 aa)) are N-acetyltransferase. Residues Arg-330 and Lys-348 each coordinate UDP-N-acetyl-alpha-D-glucosamine. His-360 functions as the Proton acceptor in the catalytic mechanism. 2 residues coordinate UDP-N-acetyl-alpha-D-glucosamine: Tyr-363 and Asn-374. Residues Ala-377, 383 to 384 (NY), Ser-402, Ala-420, and Arg-437 each bind acetyl-CoA.

In the N-terminal section; belongs to the N-acetylglucosamine-1-phosphate uridyltransferase family. The protein in the C-terminal section; belongs to the transferase hexapeptide repeat family. As to quaternary structure, homotrimer. Requires Mg(2+) as cofactor.

The protein resides in the cytoplasm. It carries out the reaction alpha-D-glucosamine 1-phosphate + acetyl-CoA = N-acetyl-alpha-D-glucosamine 1-phosphate + CoA + H(+). It catalyses the reaction N-acetyl-alpha-D-glucosamine 1-phosphate + UTP + H(+) = UDP-N-acetyl-alpha-D-glucosamine + diphosphate. Its pathway is nucleotide-sugar biosynthesis; UDP-N-acetyl-alpha-D-glucosamine biosynthesis; N-acetyl-alpha-D-glucosamine 1-phosphate from alpha-D-glucosamine 6-phosphate (route II): step 2/2. The protein operates within nucleotide-sugar biosynthesis; UDP-N-acetyl-alpha-D-glucosamine biosynthesis; UDP-N-acetyl-alpha-D-glucosamine from N-acetyl-alpha-D-glucosamine 1-phosphate: step 1/1. It functions in the pathway bacterial outer membrane biogenesis; LPS lipid A biosynthesis. Functionally, catalyzes the last two sequential reactions in the de novo biosynthetic pathway for UDP-N-acetylglucosamine (UDP-GlcNAc). The C-terminal domain catalyzes the transfer of acetyl group from acetyl coenzyme A to glucosamine-1-phosphate (GlcN-1-P) to produce N-acetylglucosamine-1-phosphate (GlcNAc-1-P), which is converted into UDP-GlcNAc by the transfer of uridine 5-monophosphate (from uridine 5-triphosphate), a reaction catalyzed by the N-terminal domain. This Pseudomonas aeruginosa (strain LESB58) protein is Bifunctional protein GlmU.